We begin with the raw amino-acid sequence, 851 residues long: MKVMGIQRNCQQWWIWGILGFWMLMICNGMGNLWVTVYYGVPVWKDASPTLFCASDAKAYDTEVHNVWGTFACVPTDPSPQELGLENVTENFNMWKNDMVEQMHQDIISLWDQGLKPCVKLTPLCVTLNCNAIKNNTKVTNNSINSANDEMKNCSFNITTELRDKKRKAYALFYKLDIVPLNNGSTDYRLINCNTSTITQACPKVSLDPIPIHYCAPAGYAILKCRDKTFTGTGPCHNVSTVQCTHGIKPVVSTQLLLNGSIAEGETIIRFENLTNNAKIIIVQLNESVEITCTRPSNNTRESIRIGPGQTFYATGDIIGDIRQAHCNISEEKWNKTLQKVKEKLQKHFPNKTIEFKPSSGGDLEITTHSFNCGGEFFYCNTSNLFNSTKLELFNSSTNLNITLQCRIKQIINMWQGVGRAMYAPPIEGIIMCRSNITGLLLTRDGAKEPHSTKEIFRPEGGDMRDNWRSELYKYKVVEIKPLGVAPTKPKRRVVEREKRAALGALFLGFLGAAGSTMGAASITLTVQARQLLSGIVQQQSNLLKAIEAQQHMLQLTVWGIKQLQTRVLAIERHLRDQQLLGIWGCSGKLICTTAVPWNSSWSNKSQEEIWDNMTWMQWDREISNYTDIIYNLLEVSQNQQDKNEKDLLALDKWENLWNWFNITNWLWYIKIFIMIVGGVIGLRIIFAVLSIVNRVRQGYSPLSFQTLIPHPRGPDRLGGIEEEGGEQGRDRSIRLVNGFLAIFWDDLRSLCLFSYHRLRDLILIAARTVELLGRSSLKGLQRGWETLKYLGSLVQYWGLELKKSAINLLNTTAIVVGEGTDRFIELIQRIWRAFCNIPRRIRQGLEAALQ.

The signal sequence occupies residues 1–31 (MKVMGIQRNCQQWWIWGILGFWMLMICNGMG). At 32–672 (NLWVTVYYGV…ITNWLWYIKI (641 aa)) the chain is on the extracellular side. Cysteine 53 and cysteine 73 are disulfide-bonded. Asparagine 87, asparagine 135, asparagine 141, asparagine 153, asparagine 157, asparagine 183, and asparagine 194 each carry an N-linked (GlcNAc...) asparagine; by host glycan. Cystine bridges form between cysteine 118–cysteine 202, cysteine 125–cysteine 193, cysteine 130–cysteine 154, cysteine 215–cysteine 244, and cysteine 225–cysteine 236. The tract at residues 130 to 153 (CNAIKNNTKVTNNSINSANDEMKN) is V1. Residues 154 to 193 (CSFNITTELRDKKRKAYALFYKLDIVPLNNGSTDYRLINC) are V2. Asparagine 238, asparagine 259, asparagine 273, asparagine 286, asparagine 298, asparagine 328, asparagine 335, and asparagine 351 each carry an N-linked (GlcNAc...) asparagine; by host glycan. The V3 stretch occupies residues 293–326 (CTRPSNNTRESIRIGPGQTFYATGDIIGDIRQAH). Residues cysteine 293 and cysteine 327 are joined by a disulfide bond. Positions 359 to 369 (SSGGDLEITTH) are CD4-binding loop. 2 disulfides stabilise this stretch: cysteine 373–cysteine 433 and cysteine 380–cysteine 406. The tract at residues 380–406 (CNTSNLFNSTKLELFNSSTNLNITLQC) is V4. N-linked (GlcNAc...) asparagine; by host glycans are attached at residues asparagine 381, asparagine 387, asparagine 395, asparagine 401, and asparagine 436. V5 stretches follow at residues 449-460 (EPHSTKEIFRPE) and 451-460 (HSTKEIFRPE). The interval 501-520 (AALGALFLGFLGAAGSTMGA) is fusion peptide. Residues 562–580 (KQLQTRVLAIERHLRDQQL) form an immunosuppression region. A disulfide bond links cysteine 586 and cysteine 592. N-linked (GlcNAc...) asparagine; by host glycosylation is found at asparagine 599, asparagine 604, asparagine 613, asparagine 625, and asparagine 662. Positions 621 to 655 (REISNYTDIIYNLLEVSQNQQDKNEKDLLALDKWE) form a coiled coil. The MPER; binding to GalCer stretch occupies residues 650–671 (ALDKWENLWNWFNITNWLWYIK). A helical transmembrane segment spans residues 673–693 (FIMIVGGVIGLRIIFAVLSIV). Over 694-851 (NRVRQGYSPL…IRQGLEAALQ (158 aa)) the chain is Cytoplasmic. The YXXL motif; contains endocytosis signal signature appears at 700–703 (YSPL). Cysteine 752 carries S-palmitoyl cysteine; by host lipidation.

The protein belongs to the HIV-1 env protein family. As to quaternary structure, the mature envelope protein (Env) consists of a homotrimer of non-covalently associated gp120-gp41 heterodimers. The resulting complex protrudes from the virus surface as a spike. There seems to be as few as 10 spikes on the average virion. Interacts with host CD4, CCR5 and CXCR4. Gp120 also interacts with the C-type lectins CD209/DC-SIGN and CLEC4M/DC-SIGNR (collectively referred to as DC-SIGN(R)). Gp120 and gp41 interact with GalCer. Gp120 interacts with host ITGA4/ITGB7 complex; on CD4+ T-cells, this interaction results in rapid activation of integrin ITGAL/LFA-1, which facilitates efficient cell-to-cell spreading of HIV-1. Gp120 interacts with cell-associated heparan sulfate; this interaction increases virus infectivity on permissive cells and may be involved in infection of CD4- cells. The mature envelope protein (Env) consists of a homotrimer of non-covalently associated gp120-gp41 heterodimers. The resulting complex protrudes from the virus surface as a spike. There seems to be as few as 10 spikes on the average virion. Highly glycosylated by host. The high number of glycan on the protein is reffered to as 'glycan shield' because it contributes to hide protein sequence from adaptive immune system. Post-translationally, palmitoylation of the transmembrane protein and of Env polyprotein (prior to its proteolytic cleavage) is essential for their association with host cell membrane lipid rafts. Palmitoylation is therefore required for envelope trafficking to classical lipid rafts, but not for viral replication. In terms of processing, specific enzymatic cleavages in vivo yield mature proteins. Envelope glycoproteins are synthesized as an inactive precursor that is heavily N-glycosylated and processed likely by host cell furin in the Golgi to yield the mature SU and TM proteins. The cleavage site between SU and TM requires the minimal sequence [KR]-X-[KR]-R. About 2 of the 9 disulfide bonds of gp41 are reduced by P4HB/PDI, following binding to CD4 receptor.

Its subcellular location is the virion membrane. It is found in the host cell membrane. The protein localises to the host endosome membrane. Oligomerizes in the host endoplasmic reticulum into predominantly trimers. In a second time, gp160 transits in the host Golgi, where glycosylation is completed. The precursor is then proteolytically cleaved in the trans-Golgi and thereby activated by cellular furin or furin-like proteases to produce gp120 and gp41. Functionally, attaches the virus to the host lymphoid cell by binding to the primary receptor CD4. This interaction induces a structural rearrangement creating a high affinity binding site for a chemokine coreceptor like CXCR4 and/or CCR5. Acts as a ligand for CD209/DC-SIGN and CLEC4M/DC-SIGNR, which are respectively found on dendritic cells (DCs), and on endothelial cells of liver sinusoids and lymph node sinuses. These interactions allow capture of viral particles at mucosal surfaces by these cells and subsequent transmission to permissive cells. HIV subverts the migration properties of dendritic cells to gain access to CD4+ T-cells in lymph nodes. Virus transmission to permissive T-cells occurs either in trans (without DCs infection, through viral capture and transmission), or in cis (following DCs productive infection, through the usual CD4-gp120 interaction), thereby inducing a robust infection. In trans infection, bound virions remain infectious over days and it is proposed that they are not degraded, but protected in non-lysosomal acidic organelles within the DCs close to the cell membrane thus contributing to the viral infectious potential during DCs' migration from the periphery to the lymphoid tissues. On arrival at lymphoid tissues, intact virions recycle back to DCs' cell surface allowing virus transmission to CD4+ T-cells. In terms of biological role, acts as a class I viral fusion protein. Under the current model, the protein has at least 3 conformational states: pre-fusion native state, pre-hairpin intermediate state, and post-fusion hairpin state. During fusion of viral and target intracellular membranes, the coiled coil regions (heptad repeats) assume a trimer-of-hairpins structure, positioning the fusion peptide in close proximity to the C-terminal region of the ectodomain. The formation of this structure appears to drive apposition and subsequent fusion of viral and target cell membranes. Complete fusion occurs in host cell endosomes and is dynamin-dependent, however some lipid transfer might occur at the plasma membrane. The virus undergoes clathrin-dependent internalization long before endosomal fusion, thus minimizing the surface exposure of conserved viral epitopes during fusion and reducing the efficacy of inhibitors targeting these epitopes. Membranes fusion leads to delivery of the nucleocapsid into the cytoplasm. This chain is Envelope glycoprotein gp160, found in Homo sapiens (Human).